Here is a 502-residue protein sequence, read N- to C-terminus: Glutamate--tRNA ligase (502 aa).

Positions 9 to 19 (PSPTGFPHVGT) match the 'HIGH' region motif. Positions 250 to 254 (KLSKR) match the 'KMSKS' region motif. ATP is bound at residue lysine 253.

The protein belongs to the class-I aminoacyl-tRNA synthetase family. Glutamate--tRNA ligase type 1 subfamily. As to quaternary structure, monomer.

The protein resides in the cytoplasm. It catalyses the reaction tRNA(Glu) + L-glutamate + ATP = L-glutamyl-tRNA(Glu) + AMP + diphosphate. Its function is as follows. Catalyzes the attachment of glutamate to tRNA(Glu) in a two-step reaction: glutamate is first activated by ATP to form Glu-AMP and then transferred to the acceptor end of tRNA(Glu). The sequence is that of Glutamate--tRNA ligase from Acinetobacter baumannii (strain AYE).